The chain runs to 112 residues: Large ribosomal subunit protein bL17 (112 aa).

Belongs to the bacterial ribosomal protein bL17 family. Part of the 50S ribosomal subunit. Contacts protein L32.

This Desulfitobacterium hafniense (strain DSM 10664 / DCB-2) protein is Large ribosomal subunit protein bL17.